A 173-amino-acid chain; its full sequence is NADH-ubiquinone oxidoreductase chain 6 (173 aa).

Transmembrane regions (helical) follow at residues 1–21, 27–47, 48–68, 91–111, and 139–159; these read MTYF…AVAS, YGVV…LSLG, VSFV…VVFV, GVSF…IGCL, and CGVG…FVVL.

Belongs to the complex I subunit 6 family.

The protein localises to the mitochondrion membrane. The enzyme catalyses a ubiquinone + NADH + 5 H(+)(in) = a ubiquinol + NAD(+) + 4 H(+)(out). Core subunit of the mitochondrial membrane respiratory chain NADH dehydrogenase (Complex I) that is believed to belong to the minimal assembly required for catalysis. Complex I functions in the transfer of electrons from NADH to the respiratory chain. The immediate electron acceptor for the enzyme is believed to be ubiquinone. The sequence is that of NADH-ubiquinone oxidoreductase chain 6 (MT-ND6) from Fratercula cirrhata (Tufted puffin).